The following is a 310-amino-acid chain: Inorganic pyrophosphatase, mitochondrial (310 aa).

The transit peptide at 1-30 (MNLLRMNALTSKARSIERLKQTLNILSIRN) directs the protein to the mitochondrion. Mg(2+) is bound by residues Asp-152, Asp-157, and Asp-189.

It belongs to the PPase family. As to quaternary structure, homodimer that binds non-covalently to a protein complex in the inner mitochondrial membrane. It depends on Mg(2+) as a cofactor.

It is found in the mitochondrion. It catalyses the reaction diphosphate + H2O = 2 phosphate + H(+). Its function is as follows. Involved in energy production. Its activity is stimulated by uncouplers of ATP synthesis. This chain is Inorganic pyrophosphatase, mitochondrial (PPA2), found in Saccharomyces cerevisiae (strain ATCC 204508 / S288c) (Baker's yeast).